Here is a 77-residue protein sequence, read N- to C-terminus: U10-lycotoxin-Ls1a (77 aa).

Residues 1–20 (MKLIIFTGLVLFAIVSLIEA) form the signal peptide. Positions 21–26 (EEESGR) are excised as a propeptide.

Belongs to the neurotoxin 19 (CSTX) family. 09 (U10-Lctx) subfamily. Contains 4 disulfide bonds. As to expression, expressed by the venom gland.

Its subcellular location is the secreted. This chain is U10-lycotoxin-Ls1a, found in Lycosa singoriensis (Wolf spider).